The sequence spans 208 residues: V-type ATP synthase subunit D (208 aa).

It belongs to the V-ATPase D subunit family.

Produces ATP from ADP in the presence of a proton gradient across the membrane. The protein is V-type ATP synthase subunit D of Chlamydia felis (strain Fe/C-56) (Chlamydophila felis).